A 192-amino-acid polypeptide reads, in one-letter code: MMPRLILASTSAYRRELLGRLHLDFDTARPEVDEHALPGETPQALATRLAGEKARAVAVRFPEAWVIGSDQVADLDGQALGKPGTLEQARAQLTRMSGRMVRFQTAVSLIGPDGFAAQALDLTDVQVRPLQPQEIERYLAAEPALECAGSFKCEGLGITLFDAIRSNDPTALVGLPLIAVARLLRQAGFSLP.

The active-site Proton acceptor is the aspartate 70.

It belongs to the Maf family. YceF subfamily. It depends on a divalent metal cation as a cofactor.

The protein resides in the cytoplasm. It catalyses the reaction N(7)-methyl-GTP + H2O = N(7)-methyl-GMP + diphosphate + H(+). Its function is as follows. Nucleoside triphosphate pyrophosphatase that hydrolyzes 7-methyl-GTP (m(7)GTP). May have a dual role in cell division arrest and in preventing the incorporation of modified nucleotides into cellular nucleic acids. The protein is 7-methyl-GTP pyrophosphatase of Xanthomonas campestris pv. campestris (strain 8004).